Consider the following 815-residue polypeptide: Cell division cycle protein 48 (815 aa).

The disordered stretch occupies residues 1 to 30 (MNAPSTMTDKKPEVEHLQGENPPKDTYSAE). The span at 8 to 18 (TDKKPEVEHLQ) shows a compositional bias: basic and acidic residues. ATP contacts are provided by residues 267–273 (PGTGKTL), Asn368, His404, and 541–546 (GTGKTL). The segment at 794 to 815 (DSADSNTNGPSFGNDGADDLYA) is disordered. The span at 795-804 (SADSNTNGPS) shows a compositional bias: polar residues.

The protein belongs to the AAA ATPase family. Component of the ribosome quality control complex (RQC), composed of the E3 ubiquitin ligase rkr1/ltn1, rqc1 and mtr1/rqc2, as well as cdc48 and its ubiquitin-binding cofactors. RQC forms a stable complex with 60S ribosomal subunits. Interacts with ubx2 and ubx3. Interacts with lub1. Interacts with rbd2 (via C-terminal SHP box); the interaction is required for rbd2-mediated cleavage of sre1 and sre2.

The protein localises to the cytoplasm. It is found in the nucleus. It catalyses the reaction ATP + H2O = ADP + phosphate + H(+). The first ATP-binding region has low ATPase activity. The second ATP-binding region is responsible for ATPase activity. ATP binding to the first ATP-binding region induces intrinsic activity of the second ATP-binding region. While ATP binding to the first ATP-binding region appears to prevent ATP hydrolysis by the second ATP-binding region, ADP-binding to first region promotes the coordinate and cooperative ATPase cycle of the second ATP-binding region. ATP binding to the first ATP-binding region induces a conformational change, promoting the rotation of the first ATP-binding region relative to the second ATP-binding region in the hexamer. In terms of biological role, ATP-dependent chaperone which probably uses the energy provided by ATP hydrolysis to generate mechanical force to unfold substrate proteins, disassemble protein complexes, and disaggregate protein aggregates. By recruiting and promoting the degradation of ubiquitinated proteins, plays a role in the ubiquitin fusion degradation (UFD) pathway. Has a role in the endoplasmic reticulum-associated degradation (ERAD) pathway which mediates the cytoplasmic elimination of misfolded proteins exported from the ER. Involved in spindle disassembly. Component of the ribosome quality control complex (RQC), a ribosome-associated complex that mediates ubiquitination and extraction of incompletely synthesized nascent chains for proteasomal degradation. CDC48 may provide the mechanical force that dislodges the polyubiquitinated nascent peptides from the exit channel. Required for ribophagy, a process which relocalizes ribosomal particles into the vacuole for degradation in response to starvation. Has a role in substrate recognition mediating rbd2-dependent cleavage of sterol regulatory element-binding protein sre1 and sre2. This chain is Cell division cycle protein 48, found in Schizosaccharomyces pombe (strain 972 / ATCC 24843) (Fission yeast).